The primary structure comprises 98 residues: Cystatin-B (98 aa).

An N-acetylmethionine modification is found at Met1. The short motif at 46–50 is the Secondary area of contact element; it reads QVVAG.

This sequence belongs to the cystatin family. As to quaternary structure, able to form dimers stabilized by noncovalent forces.

The protein resides in the cytoplasm. It is found in the nucleus. In terms of biological role, this is an intracellular thiol proteinase inhibitor. Tightly binding reversible inhibitor of cathepsins L, H and B. The polypeptide is Cystatin-B (CSTB) (Pan troglodytes (Chimpanzee)).